Here is a 348-residue protein sequence, read N- to C-terminus: Peroxidase 40 (348 aa).

An N-terminal signal peptide occupies residues 1 to 21; it reads MKNLFNLFLMFFFAMPILSLS. N-linked (GlcNAc...) asparagine glycosylation occurs at Asn-26. 4 cysteine pairs are disulfide-bonded: Cys-59/Cys-139, Cys-92/Cys-97, Cys-145/Cys-344, and Cys-224/Cys-256. The Proton acceptor role is filled by His-90. The Ca(2+) site is built by Asp-91, Val-94, Gly-96, Asp-98, and Ser-100. The disordered stretch occupies residues 170–189; that stretch reads GRKDSRTASKQAATNGLPSP. Residues 177–189 show a composition bias toward polar residues; sequence ASKQAATNGLPSP. Pro-187 lines the substrate pocket. An N-linked (GlcNAc...) asparagine glycan is attached at Asn-190. His-217 is a binding site for heme b. Residue Thr-218 coordinates Ca(2+). Ca(2+) is bound by residues Asp-269, Thr-272, and Asp-277.

This sequence belongs to the peroxidase family. Classical plant (class III) peroxidase subfamily. Heme b is required as a cofactor. Ca(2+) serves as cofactor.

Its subcellular location is the secreted. It carries out the reaction 2 a phenolic donor + H2O2 = 2 a phenolic radical donor + 2 H2O. In terms of biological role, removal of H(2)O(2), oxidation of toxic reductants, biosynthesis and degradation of lignin, suberization, auxin catabolism, response to environmental stresses such as wounding, pathogen attack and oxidative stress. These functions might be dependent on each isozyme/isoform in each plant tissue. The sequence is that of Peroxidase 40 (PER40) from Arabidopsis thaliana (Mouse-ear cress).